The primary structure comprises 66 residues: Prokaryotic ubiquitin-like protein Pup (66 aa).

The segment covering 1-10 (MAGQEQQSSS) has biased composition (low complexity). Residues 1-39 (MAGQEQQSSSPREEEHEVADAPVPVPSSPQASAHTDGVD) form a disordered region. An ARC ATPase binding region spans residues 23-60 (VPVPSSPQASAHTDGVDDLLDEIDGVLESNAEEFVRGF). Deamidated glutamine is present on Gln-66. An Isoglutamyl lysine isopeptide (Gln-Lys) (interchain with K-? in acceptor proteins) cross-link involves residue Gln-66.

The protein belongs to the prokaryotic ubiquitin-like protein family. As to quaternary structure, strongly interacts with the proteasome-associated ATPase ARC through a hydrophobic interface; the interacting region of Pup lies in its C-terminal half. There is one Pup binding site per ARC hexamer ring. Is modified by deamidation of its C-terminal glutamine to glutamate by the deamidase Dop, a prerequisite to the subsequent pupylation process.

It participates in protein degradation; proteasomal Pup-dependent pathway. Protein modifier that is covalently attached to lysine residues of substrate proteins, thereby targeting them for proteasomal degradation. The tagging system is termed pupylation. The polypeptide is Prokaryotic ubiquitin-like protein Pup (Renibacterium salmoninarum (strain ATCC 33209 / DSM 20767 / JCM 11484 / NBRC 15589 / NCIMB 2235)).